A 425-amino-acid chain; its full sequence is Tol-Pal system protein TolB (425 aa).

Residues 1–25 form the signal peptide; that stretch reads MTRKHILSFALMTALGMTVTSTAFA.

Belongs to the TolB family. As to quaternary structure, the Tol-Pal system is composed of five core proteins: the inner membrane proteins TolA, TolQ and TolR, the periplasmic protein TolB and the outer membrane protein Pal. They form a network linking the inner and outer membranes and the peptidoglycan layer.

The protein resides in the periplasm. Its function is as follows. Part of the Tol-Pal system, which plays a role in outer membrane invagination during cell division and is important for maintaining outer membrane integrity. This is Tol-Pal system protein TolB from Acinetobacter baylyi (strain ATCC 33305 / BD413 / ADP1).